Here is a 143-residue protein sequence, read N- to C-terminus: uncharacterized protein (143 aa).

A run of 2 helical transmembrane segments spans residues 16 to 36 and 48 to 68; these read LIFA…IFVW and ICYI…FIYV. An N-linked (GlcNAc...) asparagine; by host glycan is attached at N71.

It is found in the membrane. This is an uncharacterized protein from Acanthamoeba polyphaga (Amoeba).